The following is a 278-amino-acid chain: Large ribosomal subunit protein uL2 (278 aa).

2 disordered regions span residues methionine 1–aspartate 20 and valine 225–arginine 278. Residues arginine 258–arginine 278 are compositionally biased toward basic residues.

It belongs to the universal ribosomal protein uL2 family. As to quaternary structure, part of the 50S ribosomal subunit. Forms a bridge to the 30S subunit in the 70S ribosome.

Functionally, one of the primary rRNA binding proteins. Required for association of the 30S and 50S subunits to form the 70S ribosome, for tRNA binding and peptide bond formation. It has been suggested to have peptidyltransferase activity; this is somewhat controversial. Makes several contacts with the 16S rRNA in the 70S ribosome. The sequence is that of Large ribosomal subunit protein uL2 from Cutibacterium acnes (strain DSM 16379 / KPA171202) (Propionibacterium acnes).